The following is a 79-amino-acid chain: ATP synthase subunit c (79 aa).

2 consecutive transmembrane segments (helical) span residues 11 to 31 (MAAA…IGIL) and 53 to 73 (FFIV…LGLY).

The protein belongs to the ATPase C chain family. As to quaternary structure, F-type ATPases have 2 components, F(1) - the catalytic core - and F(0) - the membrane proton channel. F(1) has five subunits: alpha(3), beta(3), gamma(1), delta(1), epsilon(1). F(0) has three main subunits: a(1), b(2) and c(10-14). The alpha and beta chains form an alternating ring which encloses part of the gamma chain. F(1) is attached to F(0) by a central stalk formed by the gamma and epsilon chains, while a peripheral stalk is formed by the delta and b chains.

Its subcellular location is the cell inner membrane. F(1)F(0) ATP synthase produces ATP from ADP in the presence of a proton or sodium gradient. F-type ATPases consist of two structural domains, F(1) containing the extramembraneous catalytic core and F(0) containing the membrane proton channel, linked together by a central stalk and a peripheral stalk. During catalysis, ATP synthesis in the catalytic domain of F(1) is coupled via a rotary mechanism of the central stalk subunits to proton translocation. Functionally, key component of the F(0) channel; it plays a direct role in translocation across the membrane. A homomeric c-ring of between 10-14 subunits forms the central stalk rotor element with the F(1) delta and epsilon subunits. This Pectobacterium atrosepticum (strain SCRI 1043 / ATCC BAA-672) (Erwinia carotovora subsp. atroseptica) protein is ATP synthase subunit c.